A 395-amino-acid chain; its full sequence is Demethylmacrocin O-methyltransferase (395 aa).

The catalysed reaction is demethylmacrocin + S-adenosyl-L-methionine = macrocin + S-adenosyl-L-homocysteine + H(+). It participates in antibiotic biosynthesis; tylosin biosynthesis. O-methyltransferase that catalyzes the conversion of demethylmacrocin to macrocin, the penultimate step of tylosin antibiotic biosynthesis. Also able to mediate the conversion of demethyllactenocin to lactenocin. The sequence is that of Demethylmacrocin O-methyltransferase (tylE) from Streptomyces fradiae (Streptomyces roseoflavus).